Consider the following 967-residue polypeptide: MGNFVCIEISGDQMLDRIIRCLCGKGYIRNLEKNLRALQREMEDLRATQHEVQNKVAREESRHQQRLEAVQVWLDRVNSIDIECKDLLSVSPVELQKLCLCGLCSKYVCSSYKYGKRVFLLLEEVTKLKSEGNFDEVSQPPPRSEVEERPTQPTIGQEEMLKKAWNRLMEDGVGIMGLHGMGGVGKTTLFKKIHNKFAETGGTFDIVIWIVVSQGAKLSKLQEDIAEKLHLCDDLWKNKNESDKATDIHRVLKGKRFVLMLDDIWEKVDLEAIGIPYPSEVNKCKVAFTTRDQKVCGQMGDHKPMQVKCLEPEDAWELFKNKVGDNTLRSDPVIVGLAREVAQKCRGLPLALSCIGETMASKTMVQEWEHAIDVLTRSAAEFSDMQNKILPILKYSYDSLEDEHIKSCFLYCALFPEDDKIDTKTLINKWICEGFIGEDQVIKRARNKGYEMLGTLIRANLLTNDRGFVKWHVVMHDVVREMALWIASDFGKQKENYVVRARVGLHEIPKVKDWGAVRRMSLMMNEIEEITCESKCSELTTLFLQSNQLKNLSGEFIRYMQKLVVLDLSHNPDFNELPEQISGLVSLQYLDLSWTRIEQLPVGLKELKKLIFLNLCFTERLCSISGISRLLSLRWLSLRESNVHGDASVLKELQQLENLQDLRITESAELISLDQRLAKLISVLRIEGFLQKPFDLSFLASMENLYGLLVENSYFSEINIKCRESETESSYLHINPKIPCFTNLTGLIIMKCHSMKDLTWILFAPNLVNLDIRDSREVGEIINKEKAINLTSIITPFQKLERLFLYGLPKLESIYWSPLPFPLLSNIVVKYCPKLRKLPLNATSVPLVEEFEIRMDPPEQENELEWEDEDTKNRFLPSIKPLVRRLKIHYSGMGFLNVKNQNPRFFFYCFIYLLVVHLDCIIDLHSDTSGMCCVVHLDYVFHFPFVFPKTFCILFRLHFYTIKSLCV.

The stretch at 20-68 (RCLCGKGYIRNLEKNLRALQREMEDLRATQHEVQNKVAREESRHQQRLE) forms a coiled coil. Residues 132–153 (GNFDEVSQPPPRSEVEERPTQP) form a disordered region. The region spanning 138 to 441 (SQPPPRSEVE…CEGFIGEDQV (304 aa)) is the NB-ARC domain. 180–187 (GMGGVGKT) contacts ATP. LRR repeat units lie at residues 516–537 (AVRR…SKCS), 538–559 (ELTT…FIRY), 562–585 (KLVV…SGLV), 586–608 (SLQY…KELK), and 609–631 (KLIF…SRLL).

Belongs to the disease resistance NB-LRR family.

Its function is as follows. Probable disease resistance protein. This is Probable disease resistance protein At1g61190 from Arabidopsis thaliana (Mouse-ear cress).